Consider the following 155-residue polypeptide: Cathelicidin-1 (155 aa).

An N-terminal signal peptide occupies residues M1–A29. Q30 is subject to Pyrrolidone carboxylic acid. The propeptide occupies Q30–A143. 3 cysteine pairs are disulfide-bonded: C85-C96, C107-C124, and C146-C154.

It belongs to the cathelicidin family.

It localises to the secreted. In terms of biological role, potent microbicidal activity; active against S.aureus and E.coli. The sequence is that of Cathelicidin-1 (CATHL1A) from Ovis aries (Sheep).